A 403-amino-acid polypeptide reads, in one-letter code: Soluble calcium-activated nucleotidase 1 (403 aa).

At 1 to 44 (MPIQPFDQREWNEPMHSLRISVGGLPVLASMTKATDPRFRPRWR) the chain is on the cytoplasmic side. A helical; Signal-anchor for type II membrane protein membrane pass occupies residues 45 to 61 (VILTSFVGAALLWLLYS). Over 62-403 (HHQTPVSGRP…SVKYEGIEFI (342 aa)) the chain is Lumenal. N-linked (GlcNAc...) asparagine glycosylation is present at N90. Positions 170, 171, 217, 286, 347, and 398 each coordinate Ca(2+).

It belongs to the apyrase family. Monomer. Homodimer; dimerization is Ca(2+)-dependent. The cofactor is Ca(2+). In terms of tissue distribution, detected in intestine, thymus, heart, lung, spleen, kidney, liver, testis, skeletal muscle and brain.

It is found in the endoplasmic reticulum membrane. Its subcellular location is the golgi apparatus. The protein resides in the golgi stack membrane. It catalyses the reaction a ribonucleoside 5'-diphosphate + H2O = a ribonucleoside 5'-phosphate + phosphate + H(+). Its function is as follows. Calcium-dependent nucleotidase with a preference for UDP. The order of activity with different substrates is UDP &gt; GDP &gt; IDP &gt;&gt; UTP &gt; CDP = GTP = ITP. Has very low activity towards ADP and even lower activity towards ATP. Does not hydrolyze AMP and GMP. Involved in proteoglycan synthesis. The chain is Soluble calcium-activated nucleotidase 1 (Cant1) from Rattus norvegicus (Rat).